Consider the following 339-residue polypeptide: Dihydroorotate dehydrogenase (quinone) (339 aa).

FMN-binding positions include 62–66 (AGMDK) and Thr86. Lys66 serves as a coordination point for substrate. 111–115 (NRMGF) is a binding site for substrate. Asn139 and Asn172 together coordinate FMN. Asn172 provides a ligand contact to substrate. Ser175 functions as the Nucleophile in the catalytic mechanism. Substrate is bound at residue Asn177. FMN contacts are provided by Lys217 and Thr245. Residue 246–247 (NT) coordinates substrate. FMN-binding positions include Gly268, Gly297, and 318–319 (YS).

It belongs to the dihydroorotate dehydrogenase family. Type 2 subfamily. Monomer. FMN serves as cofactor.

The protein resides in the cell membrane. It catalyses the reaction (S)-dihydroorotate + a quinone = orotate + a quinol. The protein operates within pyrimidine metabolism; UMP biosynthesis via de novo pathway; orotate from (S)-dihydroorotate (quinone route): step 1/1. In terms of biological role, catalyzes the conversion of dihydroorotate to orotate with quinone as electron acceptor. In Shewanella sediminis (strain HAW-EB3), this protein is Dihydroorotate dehydrogenase (quinone).